The following is a 224-amino-acid chain: UPF0758 protein VIBHAR_00653 (224 aa).

One can recognise an MPN domain in the interval 102-224 (ALTSPEQTKL…SVSFAERGWI (123 aa)). Zn(2+) is bound by residues H173, H175, and D186. The JAMM motif motif lies at 173–186 (HNHPSGVAEPSQAD).

The protein belongs to the UPF0758 family.

In Vibrio campbellii (strain ATCC BAA-1116), this protein is UPF0758 protein VIBHAR_00653.